We begin with the raw amino-acid sequence, 317 residues long: Acetylglutamate kinase (317 aa).

Residues 70–71 (GG), Arg92, and Asn191 contribute to the substrate site.

This sequence belongs to the acetylglutamate kinase family. ArgB subfamily.

The protein localises to the cytoplasm. It carries out the reaction N-acetyl-L-glutamate + ATP = N-acetyl-L-glutamyl 5-phosphate + ADP. Its pathway is amino-acid biosynthesis; L-arginine biosynthesis; N(2)-acetyl-L-ornithine from L-glutamate: step 2/4. Functionally, catalyzes the ATP-dependent phosphorylation of N-acetyl-L-glutamate. This is Acetylglutamate kinase from Corynebacterium glutamicum (strain R).